The chain runs to 314 residues: Olfactory receptor 5P66 (314 aa).

Residues 1-28 are Extracellular-facing; that stretch reads MAFLENGNHTAVSEFILLGLTDDPVLRI. Asparagine 8 carries an N-linked (GlcNAc...) asparagine glycan. Residues 29 to 49 traverse the membrane as a helical segment; sequence VLFTIILCIYLVTVSGNLSTI. The Cytoplasmic segment spans residues 50-57; the sequence is LLIRVSSQ. Residues 58-78 traverse the membrane as a helical segment; sequence LHHPMYFFLSHLASADIGLSS. Residues 79-102 lie on the Extracellular side of the membrane; the sequence is SVTPNMLVNFLVERSTISYLGCGI. Residues cysteine 100 and cysteine 192 are joined by a disulfide bond. The helical transmembrane segment at 103-123 threads the bilayer; the sequence is QLSSAALFGATECFLLAAMAY. Topologically, residues 124 to 136 are cytoplasmic; that stretch reads DRFMAICNPLLYS. A helical membrane pass occupies residues 137 to 157; sequence TKMSTKVCVQLIVGSYIAGFL. The Extracellular portion of the chain corresponds to 158 to 199; it reads NASSFLLSFFSLLFCGQNIINDFFCDFAPLAELSCSDVSVFV. Residues 200–220 traverse the membrane as a helical segment; it reads VVISFSAGTVTMLTVFVIAIS. The Cytoplasmic portion of the chain corresponds to 221-240; the sequence is YSYILITILKMRSTEGRQKA. A helical transmembrane segment spans residues 241 to 261; that stretch reads FSTCTSHLTAVTLFYGTVTFI. At 262–274 the chain is on the extracellular side; that stretch reads YVMPKSSYSMDQN. Residues 275-295 form a helical membrane-spanning segment; the sequence is KIISVFYMVVVPMLNPLIYSL. The Cytoplasmic portion of the chain corresponds to 296–314; sequence RNNEIKGALKRHFDRKTFS.

This sequence belongs to the G-protein coupled receptor 1 family.

The protein localises to the cell membrane. Its function is as follows. Potential odorant receptor. In Mus musculus (Mouse), this protein is Olfactory receptor 5P66.